The sequence spans 321 residues: Probable pectate lyase A (321 aa).

The signal sequence occupies residues 1–18 (MKFVATLIACGLSGLALA). A glycan (N-linked (GlcNAc...) asparagine) is linked at asparagine 93. Ca(2+) contacts are provided by aspartate 134, aspartate 163, and aspartate 167. The active site involves arginine 220. Residue asparagine 238 is glycosylated (N-linked (GlcNAc...) asparagine).

Belongs to the polysaccharide lyase 1 family. Ca(2+) serves as cofactor.

The protein localises to the secreted. It catalyses the reaction Eliminative cleavage of (1-&gt;4)-alpha-D-galacturonan to give oligosaccharides with 4-deoxy-alpha-D-galact-4-enuronosyl groups at their non-reducing ends.. In terms of biological role, pectinolytic enzyme consist of four classes of enzymes: pectin lyase, polygalacturonase, pectin methylesterase and rhamnogalacturonase. Among pectinolytic enzymes, pectin lyase is the most important in depolymerization of pectin, since it cleaves internal glycosidic bonds of highly methylated pectins. Favors pectate, the anion, over pectin, the methyl ester. The protein is Probable pectate lyase A (plyA) of Aspergillus fumigatus (strain ATCC MYA-4609 / CBS 101355 / FGSC A1100 / Af293) (Neosartorya fumigata).